Consider the following 286-residue polypeptide: Homoserine kinase (286 aa).

Residue 78–88 coordinates ATP; it reads PLARGLGSSSS.

Belongs to the GHMP kinase family. Homoserine kinase subfamily.

It is found in the cytoplasm. It catalyses the reaction L-homoserine + ATP = O-phospho-L-homoserine + ADP + H(+). It functions in the pathway amino-acid biosynthesis; L-threonine biosynthesis; L-threonine from L-aspartate: step 4/5. Functionally, catalyzes the ATP-dependent phosphorylation of L-homoserine to L-homoserine phosphate. This chain is Homoserine kinase, found in Streptococcus suis (strain 98HAH33).